The sequence spans 335 residues: Aspartate--ammonia ligase (335 aa).

The protein belongs to the class-II aminoacyl-tRNA synthetase family. AsnA subfamily.

It is found in the cytoplasm. It carries out the reaction L-aspartate + NH4(+) + ATP = L-asparagine + AMP + diphosphate + H(+). It participates in amino-acid biosynthesis; L-asparagine biosynthesis; L-asparagine from L-aspartate (ammonia route): step 1/1. The polypeptide is Aspartate--ammonia ligase (Pediococcus pentosaceus (strain ATCC 25745 / CCUG 21536 / LMG 10740 / 183-1w)).